The following is a 349-amino-acid chain: Isopentenyl-diphosphate delta-isomerase (349 aa).

A substrate-binding site is contributed by 6-7 (RK). FMN is bound by residues 62–64 (AMT), S93, and N122. A substrate-binding site is contributed by Q152. E153 is a Mg(2+) binding site. Residues K184, T214, 258-259 (GG), and 280-281 (AG) each bind FMN.

The protein belongs to the IPP isomerase type 2 family. Homooctamer. Dimer of tetramers. Requires FMN as cofactor. NADPH serves as cofactor. It depends on Mg(2+) as a cofactor.

It localises to the cytoplasm. It carries out the reaction isopentenyl diphosphate = dimethylallyl diphosphate. Involved in the biosynthesis of isoprenoids. Catalyzes the 1,3-allylic rearrangement of the homoallylic substrate isopentenyl (IPP) to its allylic isomer, dimethylallyl diphosphate (DMAPP). The protein is Isopentenyl-diphosphate delta-isomerase of Bacillus cytotoxicus (strain DSM 22905 / CIP 110041 / 391-98 / NVH 391-98).